Reading from the N-terminus, the 515-residue chain is Dimethylnonatriene synthase (515 aa).

Residues 3 to 23 (FLFSTLQLSLFSLALVIFGYI) traverse the membrane as a helical segment. A substrate-binding site is contributed by His-219. A Glycyl lysine isopeptide (Lys-Gly) (interchain with G-Cter in ubiquitin) cross-link involves residue Lys-252. Position 452 (Cys-452) interacts with heme.

It belongs to the cytochrome P450 family. The cofactor is heme. In terms of tissue distribution, expressed in stems, flower peduncles, receptacle of developing and mature flowers and in stigma of mature opening flower buds.

Its subcellular location is the membrane. The catalysed reaction is (3S,6E)-nerolidol + reduced [NADPH--hemoprotein reductase] + O2 = (3E)-4,8-dimethylnona-1,3,7-triene + but-3-en-2-one + oxidized [NADPH--hemoprotein reductase] + 2 H2O + H(+). It carries out the reaction (6E,10E)-geranyllinalool + reduced [NADPH--hemoprotein reductase] + O2 = (3E,7E)-4,8,12-trimethyltrideca 1,3,7,11-tetraene + but-3-en-2-one + oxidized [NADPH--hemoprotein reductase] + 2 H2O + H(+). It functions in the pathway secondary metabolite biosynthesis; terpenoid biosynthesis. Involved in the biosynthesis of homoterpenes, attractants of herbivores parasitoids and predators (e.g. predatory mites and parasitoid wasps). Catalyzes the conversion of the C20 (E,E)-geranyllinalool to C16-homoterpene 4,8,12-trimethyltrideca-1,3,7,11-tetraene (TMTT) of the C15 (E)-nerolidol to C11-homoterpene (E)-4,8-dimethyl-1,3,7-nonatriene (DMNT); these volatile compounds are produced upon insect herbivore attack and emitted from flowers and vegetative tissues during herbivore feeding. Required during resistance responses to the fungus Alternaria brassicae. Prevents oviposition of the phloem-feeding insect cabbage whitefly (Aleyrodes proletella). In Arabidopsis thaliana (Mouse-ear cress), this protein is Dimethylnonatriene synthase.